The sequence spans 190 residues: Ribose 1,5-bisphosphate phosphokinase PhnN (190 aa).

ATP is bound at residue 19–26; sequence GPSGVGKD.

Belongs to the ribose 1,5-bisphosphokinase family.

It carries out the reaction alpha-D-ribose 1,5-bisphosphate + ATP = 5-phospho-alpha-D-ribose 1-diphosphate + ADP. It functions in the pathway metabolic intermediate biosynthesis; 5-phospho-alpha-D-ribose 1-diphosphate biosynthesis; 5-phospho-alpha-D-ribose 1-diphosphate from D-ribose 5-phosphate (route II): step 3/3. Catalyzes the phosphorylation of ribose 1,5-bisphosphate to 5-phospho-D-ribosyl alpha-1-diphosphate (PRPP). In Ruegeria sp. (strain TM1040) (Silicibacter sp.), this protein is Ribose 1,5-bisphosphate phosphokinase PhnN.